Here is a 70-residue protein sequence, read N- to C-terminus: ATP synthase subunit c (70 aa).

A run of 2 helical transmembrane segments spans residues 4–24 (IAAA…NGLI) and 45–65 (LMFI…VIAF).

It belongs to the ATPase C chain family. In terms of assembly, F-type ATPases have 2 components, F(1) - the catalytic core - and F(0) - the membrane proton channel. F(1) has five subunits: alpha(3), beta(3), gamma(1), delta(1), epsilon(1). F(0) has three main subunits: a(1), b(2) and c(10-14). The alpha and beta chains form an alternating ring which encloses part of the gamma chain. F(1) is attached to F(0) by a central stalk formed by the gamma and epsilon chains, while a peripheral stalk is formed by the delta and b chains.

It is found in the cell membrane. Functionally, f(1)F(0) ATP synthase produces ATP from ADP in the presence of a proton or sodium gradient. F-type ATPases consist of two structural domains, F(1) containing the extramembraneous catalytic core and F(0) containing the membrane proton channel, linked together by a central stalk and a peripheral stalk. During catalysis, ATP synthesis in the catalytic domain of F(1) is coupled via a rotary mechanism of the central stalk subunits to proton translocation. In terms of biological role, key component of the F(0) channel; it plays a direct role in translocation across the membrane. A homomeric c-ring of between 10-14 subunits forms the central stalk rotor element with the F(1) delta and epsilon subunits. In Bacillus licheniformis (strain ATCC 14580 / DSM 13 / JCM 2505 / CCUG 7422 / NBRC 12200 / NCIMB 9375 / NCTC 10341 / NRRL NRS-1264 / Gibson 46), this protein is ATP synthase subunit c.